Reading from the N-terminus, the 921-residue chain is Isoleucine--tRNA ligase (921 aa).

The 'HIGH' region motif lies at 57 to 67 (PYANGDIHMGH). Residue glutamate 552 participates in L-isoleucyl-5'-AMP binding. Positions 593-597 (KMSKS) match the 'KMSKS' region motif. Lysine 596 lines the ATP pocket. Zn(2+) contacts are provided by cysteine 888, cysteine 891, cysteine 908, and cysteine 911.

It belongs to the class-I aminoacyl-tRNA synthetase family. IleS type 1 subfamily. In terms of assembly, monomer. Zn(2+) is required as a cofactor.

It localises to the cytoplasm. The catalysed reaction is tRNA(Ile) + L-isoleucine + ATP = L-isoleucyl-tRNA(Ile) + AMP + diphosphate. In terms of biological role, catalyzes the attachment of isoleucine to tRNA(Ile). As IleRS can inadvertently accommodate and process structurally similar amino acids such as valine, to avoid such errors it has two additional distinct tRNA(Ile)-dependent editing activities. One activity is designated as 'pretransfer' editing and involves the hydrolysis of activated Val-AMP. The other activity is designated 'posttransfer' editing and involves deacylation of mischarged Val-tRNA(Ile). The chain is Isoleucine--tRNA ligase from Bacillus cereus (strain AH820).